Here is a 208-residue protein sequence, read N- to C-terminus: V-type ATP synthase subunit D (208 aa).

Belongs to the V-ATPase D subunit family.

Produces ATP from ADP in the presence of a proton gradient across the membrane. This Streptococcus pyogenes serotype M6 (strain ATCC BAA-946 / MGAS10394) protein is V-type ATP synthase subunit D.